A 159-amino-acid chain; its full sequence is Neurotrophin-3 (159 aa).

Positions 1-3 (IQS) are cleaved as a signal peptide. The propeptide occupies 4–115 (TSMDQGILTE…VQNRTSRRKR (112 aa)). Residues 91–129 (APLEPPPLYLTEEPLVQNRTSRRKREGKRHRGEYSVCDS) form a disordered region. An N-linked (GlcNAc...) asparagine glycan is attached at Asn108. A compositionally biased stretch (basic residues) spans 110-121 (TSRRKREGKRHR).

This sequence belongs to the NGF-beta family.

It is found in the secreted. Seems to promote the survival of visceral and proprioceptive sensory neurons. The polypeptide is Neurotrophin-3 (NTF3) (Candoia carinata (Papuan tree boa)).